Reading from the N-terminus, the 312-residue chain is METENDTMVTEFIILGLTDSATLRAILFVFFLPVYIVTVVGNISIILLIRSSPQLHTPMYLFLSHLAFVDIGYSTSVTPIMLISFLREETTIPLAGCAAQLGSDVAFGTTECFLLATMAYDRYVAICSPLLYSTQMSPAICCFLLGASYLGGCMNASSFTGCFVNLNFCGPNKVNHFFCDLFPLVKLSCGHAYIAEISPSISSASVLVSTLSTIIVSYIYILHSILRMRSAEGRNKAFSTCTSHLTAVTLFYGTVLFVYVMPKSSYSADQVKVASVVYTVVIPMLNPLIYSLRNKEVKEAMKKLMARTHWFP.

The Extracellular segment spans residues 1–25 (METENDTMVTEFIILGLTDSATLRA). Asparagine 5 is a glycosylation site (N-linked (GlcNAc...) asparagine). A helical transmembrane segment spans residues 26 to 46 (ILFVFFLPVYIVTVVGNISII). Residues 47-54 (LLIRSSPQ) are Cytoplasmic-facing. Residues 55–75 (LHTPMYLFLSHLAFVDIGYST) traverse the membrane as a helical segment. The Extracellular portion of the chain corresponds to 76–99 (SVTPIMLISFLREETTIPLAGCAA). A disulfide bond links cysteine 97 and cysteine 189. The chain crosses the membrane as a helical span at residues 100-120 (QLGSDVAFGTTECFLLATMAY). Over 121–133 (DRYVAICSPLLYS) the chain is Cytoplasmic. The helical transmembrane segment at 134–154 (TQMSPAICCFLLGASYLGGCM) threads the bilayer. Over 155–196 (NASSFTGCFVNLNFCGPNKVNHFFCDLFPLVKLSCGHAYIAE) the chain is Extracellular. Residues 197–217 (ISPSISSASVLVSTLSTIIVS) form a helical membrane-spanning segment. Topologically, residues 218–237 (YIYILHSILRMRSAEGRNKA) are cytoplasmic. A helical transmembrane segment spans residues 238 to 258 (FSTCTSHLTAVTLFYGTVLFV). Residues 259–271 (YVMPKSSYSADQV) are Extracellular-facing. Residues 272–292 (KVASVVYTVVIPMLNPLIYSL) traverse the membrane as a helical segment. The Cytoplasmic segment spans residues 293-312 (RNKEVKEAMKKLMARTHWFP).

Belongs to the G-protein coupled receptor 1 family.

It localises to the cell membrane. Its function is as follows. Potential odorant receptor. This is Olfactory receptor 5P4 from Mus musculus (Mouse).